The primary structure comprises 170 residues: CCHC-type zinc finger nucleic acid binding protein (170 aa).

The residue at position 2 (serine 2) is an N-acetylserine. A CCHC-type 1 zinc finger spans residues 4–21 (NECFKCGRSGHWARECPT). An N6-acetyllysine modification is found at lysine 8. An omega-N-methylarginine; by PRMT1 mark is found at arginine 25 and arginine 27. Residues 25 to 33 (RGRGMRSRG) form an RNA-binding Arg/Gly-rich region (RGG-box) region. The residue at position 42 (serine 42) is a Phosphoserine. CCHC-type zinc fingers lie at residues 45–62 (DICYRCGESGHLAKDCDL), 65–82 (DACYNCGRGGHIAKDCKE), 89–106 (QCCYNCGKPGHLARDCDH), 110–127 (QKCYSCGEFGHIQKDCTK), 128–145 (VKCYRCGETGHVAINCSK), and 149–166 (VNCYRCGESGHLARECTI). Omega-N-methylarginine is present on arginine 72.

As to quaternary structure, associates with the 40S ribosomal subunit, the 80S ribosome and with polysomes. In terms of processing, arginine methylation by PRMT1 in the Arg/Gly-rich region impedes RNA binding.

It localises to the nucleus. The protein resides in the cytoplasm. Its subcellular location is the endoplasmic reticulum. Single-stranded DNA-binding protein that preferentially binds to the sterol regulatory element (SRE) sequence 5'-GTGCGGTG-3', and thereby mediates transcriptional repression. Has a role as transactivator of the Myc promoter. Binds single-stranded RNA in a sequence-specific manner. Binds G-rich elements in target mRNA coding sequences. Prevents G-quadruplex structure formation in vitro, suggesting a role in supporting translation by resolving stable structures on mRNAs. In Bos taurus (Bovine), this protein is CCHC-type zinc finger nucleic acid binding protein (CNBP).